Reading from the N-terminus, the 608-residue chain is MKTPAWSRLAGYAWGVLLWNVLVALFGAYVRATGSGAGCGAHWPTCNGEVIPRAPQVETLIEFTHRATSGLAFLSVLALFLWALRAFPKGHPARFGAGLALFFMVTESLVGASLVLFGWTADNVSRERAVVQMVHLANTYFLLAALALTAWWASGGGPLRLRGQGAVGLALFLGLLALLFLGMSGAVTALGDLLFPVGSTLEALERSLTPGEHFLVRLRVLHPLIAVSVGLYVVFAGYLVAHLRPSPLTRRLAQGLAYLYGAQLLAGLINVALKAPVWMQILHLLLAYAVWLLFVFLATSALERGAKRVELGEGGEAVHRGTGGATWRDYLALTKPRVISLLLFTALFGALIAAKGWPGLGVFLAVALGGYMMAGAANAINMVVDRDIDARMKRTAKRPTVTQRVSSRDALLFAFALAVLGFAVLWWGANLLAATLALMGLIWYVLVYTLYLKRRTWHNIVIGGAAGAFPPLVGWAAVTGELSLFAWYLFALIFFWTPVHFWALALMIQDDYRAVGVPMLPVVLGERATVIQIALYALLTALISLMPLLLGELGLLYLAASLLLNALLLLKSLALYRRPERRTAVSLYKYSMLYLALLFAAMAVDRAV.

Residues 1–304 form a COX15/CtaA region; it reads MKTPAWSRLA…VFLATSALER (304 aa). 17 consecutive transmembrane segments (helical) span residues 10–30, 67–87, 99–119, 139–159, 167–187, 220–240, 252–272, 277–297, 338–357, 362–384, 411–431, 432–452, 460–480, 488–508, 530–550, 555–575, and 584–604; these read AGYA…GAYV, ATSG…LRAF, LALF…LFGW, TYFL…GGPL, VGLA…SGAV, VLHP…GYLV, LAQG…INVA, VWMQ…FVFL, VISL…AKGW, VFLA…NMVV, LLFA…GANL, LAAT…TLYL, IVIG…AVTG, YLFA…ALMI, VIQI…PLLL, LLYL…SLAL, and AVSL…AMAV. A protoheme IX prenyltransferase region spans residues 339-606; the sequence is ISLLLFTALF…LLFAAMAVDR (268 aa).

In the N-terminal section; belongs to the COX15/CtaA family. This sequence in the C-terminal section; belongs to the UbiA prenyltransferase family. Protoheme IX farnesyltransferase subfamily.

The protein resides in the cell inner membrane. The catalysed reaction is heme b + (2E,6E)-farnesyl diphosphate + H2O = Fe(II)-heme o + diphosphate. It functions in the pathway porphyrin-containing compound metabolism; heme O biosynthesis; heme O from protoheme: step 1/1. Converts heme B (protoheme IX) to heme O by substitution of the vinyl group on carbon 2 of heme B porphyrin ring with a hydroxyethyl farnesyl side group. This chain is Protoheme IX farnesyltransferase (ctaB), found in Thermus thermophilus (strain ATCC BAA-163 / DSM 7039 / HB27).